The primary structure comprises 222 residues: Probable fimbrial chaperone EcpB (222 aa).

A signal peptide spans 1–20; it reads MKKHLLLLALLLSGISPAQA.

The protein belongs to the EcpB/EcpE family.

Its function is as follows. Part of the ecpRABCDE operon, which encodes the E.coli common pilus (ECP). ECP is found in both commensal and pathogenic strains and plays a dual role in early-stage biofilm development and host cell recognition. The sequence is that of Probable fimbrial chaperone EcpB (ecpB) from Escherichia coli O157:H7.